A 115-amino-acid polypeptide reads, in one-letter code: Large ribosomal subunit protein eL30 (115 aa).

Phosphoserine is present on residues serine 10 and serine 16. N6-acetyllysine; alternate is present on lysine 26. Lysine 26 is covalently cross-linked (Glycyl lysine isopeptide (Lys-Gly) (interchain with G-Cter in SUMO2); alternate).

It belongs to the eukaryotic ribosomal protein eL30 family. Component of the large ribosomal subunit.

The protein resides in the cytoplasm. In terms of biological role, component of the large ribosomal subunit. The ribosome is a large ribonucleoprotein complex responsible for the synthesis of proteins in the cell. This Oryctolagus cuniculus (Rabbit) protein is Large ribosomal subunit protein eL30 (RPL30).